An 841-amino-acid chain; its full sequence is Protein translocase subunit SecA (841 aa).

ATP-binding positions include glutamine 85, 103 to 107, and aspartate 492; that span reads GEGKT. Positions 788 to 841 are disordered; that stretch reads EVVQGQTTAHQPQEGDEEKTVKKKPVRKVVDIGRNSPCHCGSGKKYKNCHGKTE. The Zn(2+) site is built by cysteine 825, cysteine 827, cysteine 836, and histidine 837. Basic residues predominate over residues 829 to 841; it reads SGKKYKNCHGKTE.

This sequence belongs to the SecA family. Monomer and homodimer. Part of the essential Sec protein translocation apparatus which comprises SecA, SecYEG and auxiliary proteins SecDF. Other proteins may also be involved. It depends on Zn(2+) as a cofactor.

It localises to the cell membrane. The protein resides in the cytoplasm. The enzyme catalyses ATP + H2O + cellular proteinSide 1 = ADP + phosphate + cellular proteinSide 2.. Functionally, part of the Sec protein translocase complex. Interacts with the SecYEG preprotein conducting channel. Has a central role in coupling the hydrolysis of ATP to the transfer of proteins into and across the cell membrane, serving as an ATP-driven molecular motor driving the stepwise translocation of polypeptide chains across the membrane. This is Protein translocase subunit SecA from Bacillus pumilus (strain SAFR-032).